Reading from the N-terminus, the 359-residue chain is Queuine tRNA-ribosyltransferase (359 aa).

D92 serves as the catalytic Proton acceptor. Residues 92 to 96 (DSGGF), D146, Q189, and G216 contribute to the substrate site. An RNA binding region spans residues 245 to 251 (GVGKPAD). D264 serves as the catalytic Nucleophile. An RNA binding; important for wobble base 34 recognition region spans residues 269 to 273 (TRSGR). Positions 302, 304, 307, and 333 each coordinate Zn(2+).

Belongs to the queuine tRNA-ribosyltransferase family. Homodimer. Within each dimer, one monomer is responsible for RNA recognition and catalysis, while the other monomer binds to the replacement base PreQ1. The cofactor is Zn(2+).

The catalysed reaction is 7-aminomethyl-7-carbaguanine + guanosine(34) in tRNA = 7-aminomethyl-7-carbaguanosine(34) in tRNA + guanine. It functions in the pathway tRNA modification; tRNA-queuosine biosynthesis. Catalyzes the base-exchange of a guanine (G) residue with the queuine precursor 7-aminomethyl-7-deazaguanine (PreQ1) at position 34 (anticodon wobble position) in tRNAs with GU(N) anticodons (tRNA-Asp, -Asn, -His and -Tyr). Catalysis occurs through a double-displacement mechanism. The nucleophile active site attacks the C1' of nucleotide 34 to detach the guanine base from the RNA, forming a covalent enzyme-RNA intermediate. The proton acceptor active site deprotonates the incoming PreQ1, allowing a nucleophilic attack on the C1' of the ribose to form the product. After dissociation, two additional enzymatic reactions on the tRNA convert PreQ1 to queuine (Q), resulting in the hypermodified nucleoside queuosine (7-(((4,5-cis-dihydroxy-2-cyclopenten-1-yl)amino)methyl)-7-deazaguanosine). The protein is Queuine tRNA-ribosyltransferase of Rickettsia bellii (strain RML369-C).